The sequence spans 591 residues: Alternative cytochrome c oxidase subunit 1 (591 aa).

A helical transmembrane segment spans residues 40 to 60 (VIAIQYSLTASAIGLVALVLS). H88 is a binding site for heme b. 11 consecutive transmembrane segments (helical) span residues 90–110 (MIMVIYLLTALFLGGFGNYLI), 126–146 (MLSYWVYLLAVLVLASAFFVP), 172–192 (GIVLMLSSLILFIIGFTMGGL), 215–235 (VWGIFTATVMALLAFPALFVG), 274–294 (LFWFFGHPEVYIVALPAFGIV), 313–333 (VWAIVAIGALSFVVWAHHMYV), 337–357 (YPYFGFFFATTTLIIAIPTAI), 377–397 (MLFALGFIITFVNGGLTGLFL), 412–432 (VVAHFHMVMGVAPIMVVLGAI), 453–473 (FWVTFLGAYLIFFPMHYLGLL), and 498–518 (FITVVALTVGFAQMVFLFNLV). The Cu cation site is built by H280, Y284, H329, and H330. The 1'-histidyl-3'-tyrosine (His-Tyr) cross-link spans 280 to 284 (HPEVY). Heme b is bound by residues H415 and H417.

The protein belongs to the heme-copper respiratory oxidase family. This alternate cytochrome c oxidase consists of a subunit I and two cytochromes c. Equivalents to subunit 2 and 3 are not present in this complex.

It localises to the cell membrane. The catalysed reaction is 4 Fe(II)-[cytochrome c] + O2 + 8 H(+)(in) = 4 Fe(III)-[cytochrome c] + 2 H2O + 4 H(+)(out). Cytochrome c oxidase is the component of the respiratory chain that catalyzes the reduction of oxygen to water. Subunits 1-3 form the functional core of the enzyme complex. Co I is the catalytic subunit of the enzyme. Electrons originating in cytochrome c are transferred via the copper A center of subunit 2 and a low-spin heme of subunit 1 to the bimetallic center formed by a high-spin heme and copper B. The polypeptide is Alternative cytochrome c oxidase subunit 1 (coxN) (Bradyrhizobium diazoefficiens (strain JCM 10833 / BCRC 13528 / IAM 13628 / NBRC 14792 / USDA 110)).